A 251-amino-acid polypeptide reads, in one-letter code: Probable phosphatase Sputcn32_1369 (251 aa).

Residues H8, H10, H16, H41, E74, H102, H132, D193, and H195 each coordinate Zn(2+).

It belongs to the PHP family. It depends on Zn(2+) as a cofactor.

In Shewanella putrefaciens (strain CN-32 / ATCC BAA-453), this protein is Probable phosphatase Sputcn32_1369.